A 204-amino-acid chain; its full sequence is Quinol oxidase subunit 3 (204 aa).

Transmembrane regions (helical) follow at residues phenylalanine 27 to valine 47, leucine 66 to histidine 86, glycine 95 to isoleucine 115, phenylalanine 118 to phenylalanine 138, leucine 140 to isoleucine 160, and phenylalanine 184 to leucine 204.

This sequence belongs to the cytochrome c oxidase subunit 3 family.

Its subcellular location is the cell membrane. It catalyses the reaction 2 a quinol + O2 = 2 a quinone + 2 H2O. In terms of biological role, catalyzes quinol oxidation with the concomitant reduction of oxygen to water. Major component for energy conversion during vegetative growth. The chain is Quinol oxidase subunit 3 (qoxC) from Bacillus subtilis (strain 168).